A 371-amino-acid polypeptide reads, in one-letter code: DNA replication and repair protein RecF (371 aa).

30 to 37 (GQNGSGKT) contacts ATP.

This sequence belongs to the RecF family.

The protein localises to the cytoplasm. Its function is as follows. The RecF protein is involved in DNA metabolism; it is required for DNA replication and normal SOS inducibility. RecF binds preferentially to single-stranded, linear DNA. It also seems to bind ATP. In Chlorobium phaeovibrioides (strain DSM 265 / 1930) (Prosthecochloris vibrioformis (strain DSM 265)), this protein is DNA replication and repair protein RecF.